The sequence spans 173 residues: ATP synthase subunit b (173 aa).

A helical membrane pass occupies residues 15–35 (GVEWGTVIVQVLTFIVLLALL).

The protein belongs to the ATPase B chain family. As to quaternary structure, F-type ATPases have 2 components, F(1) - the catalytic core - and F(0) - the membrane proton channel. F(1) has five subunits: alpha(3), beta(3), gamma(1), delta(1), epsilon(1). F(0) has three main subunits: a(1), b(2) and c(10-14). The alpha and beta chains form an alternating ring which encloses part of the gamma chain. F(1) is attached to F(0) by a central stalk formed by the gamma and epsilon chains, while a peripheral stalk is formed by the delta and b chains.

Its subcellular location is the cell membrane. Functionally, f(1)F(0) ATP synthase produces ATP from ADP in the presence of a proton or sodium gradient. F-type ATPases consist of two structural domains, F(1) containing the extramembraneous catalytic core and F(0) containing the membrane proton channel, linked together by a central stalk and a peripheral stalk. During catalysis, ATP synthesis in the catalytic domain of F(1) is coupled via a rotary mechanism of the central stalk subunits to proton translocation. Its function is as follows. Component of the F(0) channel, it forms part of the peripheral stalk, linking F(1) to F(0). In Staphylococcus aureus (strain MRSA252), this protein is ATP synthase subunit b.